Reading from the N-terminus, the 276-residue chain is Probable ABC transporter permease protein PH1036 (276 aa).

The next 6 membrane-spanning stretches (helical) occupy residues Ile-12–Val-32, Ile-75–Phe-95, Phe-109–Leu-129, Thr-137–Met-157, Ile-186–Val-206, and Gly-241–Phe-261. An ABC transmembrane type-1 domain is found at Leu-70–Phe-261.

It belongs to the binding-protein-dependent transport system permease family. MalFG subfamily.

It is found in the cell membrane. Functionally, probably part of a binding-protein-dependent transport system PH1036/38/39. Probably responsible for the translocation of the substrate across the membrane. In Pyrococcus horikoshii (strain ATCC 700860 / DSM 12428 / JCM 9974 / NBRC 100139 / OT-3), this protein is Probable ABC transporter permease protein PH1036.